The primary structure comprises 635 residues: MVSIRLPDGSVRQYEHPVTVAEVAASIGPGLAKAALGGKLDGELVDTSTVIDRDASLAIVTDKDADGLDIIRHSTAHLLAYAVKELYPDAQVTIGPVIDNGFYYDFSYNRPFTPEDLEKIEKRMQELAKKDEPVTRRVVSRDEAAGYFRSIGEKYKAEIIESIPQSDEIKLYSHGGFTDLCRGPHVPSTGKLKVFKLMKVAGAYWRGDSKNEQLQRIYGTAWTKKEDQDQYLHMLEEAEKRDHRKLGKQLDLFHMQEESPGMVFWHPKGWALWQQVEQYMRRRVNEAGYLEIKTPMIMDRSLWEASGHWQNYRENMFTTESEKRDYAIKPMNCPGHVQVFKHGLRSYRDLPLRYAEFGSCHRNEASGALHGLMRVRGFVQDDAHIFCTEDQFISESIAFNTLAMSVYKDFGFDHIDIKLSLRPDQRAGTDETWDRAEQGLRDALTACGLTWEELPGEGAFYGPKIEYHIKDALGRSWQCGTLQLDMVLPERLGAEYVAEDNSRRRPVMLHRAIVGSMERFLGILIEHHAGAMPVWLAPYQAIVLNIAESQAEYAQSLAQSLQKQGVRVAADLRNEKISYKIREHTLEKVPYLLVVGDKERDAQTVAVRARGGVDLGVMPVEAFVERLQEDLRSFK.

The region spanning 1–61 (MVSIRLPDGS…DRDASLAIVT (61 aa)) is the TGS domain. The tract at residues 242–533 (DHRKLGKQLD…LIEHHAGAMP (292 aa)) is catalytic. Zn(2+)-binding residues include C333, H384, and H510.

Belongs to the class-II aminoacyl-tRNA synthetase family. Homodimer. The cofactor is Zn(2+).

It localises to the cytoplasm. The catalysed reaction is tRNA(Thr) + L-threonine + ATP = L-threonyl-tRNA(Thr) + AMP + diphosphate + H(+). Its function is as follows. Catalyzes the attachment of threonine to tRNA(Thr) in a two-step reaction: L-threonine is first activated by ATP to form Thr-AMP and then transferred to the acceptor end of tRNA(Thr). Also edits incorrectly charged L-seryl-tRNA(Thr). The protein is Threonine--tRNA ligase of Burkholderia cenocepacia (strain ATCC BAA-245 / DSM 16553 / LMG 16656 / NCTC 13227 / J2315 / CF5610) (Burkholderia cepacia (strain J2315)).